A 372-amino-acid polypeptide reads, in one-letter code: E3 ubiquitin-protein ligase RNF34 (372 aa).

The segment at 56 to 107 adopts an FYVE-type zinc-finger fold; it reads EGPNIVCKACGLSFSVFRKKHVCCDCKKDFCSVCSVLQENLRRCSTCHLLQE. An SAP 1 domain is found at 115-134; that stretch reads LMRLKVKDLRQYLILRNIPI. Ser-169 bears the Phosphoserine mark. A disordered region spans residues 194–253; it reads QGELMDGDQTSRSGVPAQVQSEITSANTEDDDDDDDEDDDDEEENAEDRNPGLSKERVRA. Positions 201–220 are enriched in polar residues; the sequence is DQTSRSGVPAQVQSEITSAN. A compositionally biased stretch (acidic residues) spans 221 to 239; that stretch reads TEDDDDDDDEDDDDEEENA. Over residues 240-252 the composition is skewed to basic and acidic residues; that stretch reads EDRNPGLSKERVR. Ser-254 and Ser-256 each carry phosphoserine. The SAP 2 domain occupies 264–278; that stretch reads VEGMSVRQLKEILAR. Residues 325–360 form an RING-type zinc finger; that stretch reads CRICMDAVIDCVLLECGHMVTCTKCGKRMSECPICR.

As to quaternary structure, interacts with CASP8 and CASP10. Interacts (via RING-type zinc finger) with PPARGC1A. Interacts with NOD1. Interacts with p53/TP53; involved in p53/TP53 ubiquitination. Interacts (via RING-type zinc finger) with MDM2; the interaction stabilizes MDM2. Post-translationally, autoubiquitinated (in vitro). In terms of processing, proteolytically cleaved by caspases upon induction of apoptosis by TNF. Ubiquitous. Detected in heart, brain, liver, skeletal muscle, kidney, pancreas, spleen, thymus, prostate, testis, ovary, colon and leukocytes.

The protein resides in the cell membrane. The protein localises to the endomembrane system. Its subcellular location is the nucleus. It is found in the nucleus speckle. It localises to the cytoplasm. The protein resides in the cytosol. It carries out the reaction S-ubiquitinyl-[E2 ubiquitin-conjugating enzyme]-L-cysteine + [acceptor protein]-L-lysine = [E2 ubiquitin-conjugating enzyme]-L-cysteine + N(6)-ubiquitinyl-[acceptor protein]-L-lysine.. The protein operates within protein modification; protein ubiquitination. Functionally, E3 ubiquitin-protein ligase that regulates several biological processes through the ubiquitin-mediated proteasomal degradation of various target proteins. Ubiquitinates the caspases CASP8 and CASP10, promoting their proteasomal degradation, to negatively regulate cell death downstream of death domain receptors in the extrinsic pathway of apoptosis. May mediate 'Lys-48'-linked polyubiquitination of RIPK1 and its subsequent proteasomal degradation thereby indirectly regulating the tumor necrosis factor-mediated signaling pathway. Negatively regulates p53/TP53 through its direct ubiquitination and targeting to proteasomal degradation. Indirectly, may also negatively regulate p53/TP53 through ubiquitination and degradation of SFN. Mediates PPARGC1A proteasomal degradation probably through ubiquitination thereby indirectly regulating the metabolism of brown fat cells. Possibly involved in innate immunity, through 'Lys-48'-linked polyubiquitination of NOD1 and its subsequent proteasomal degradation. This is E3 ubiquitin-protein ligase RNF34 from Homo sapiens (Human).